Reading from the N-terminus, the 678-residue chain is MKLQKLRNIGIIAHVDAGKTTLTERLLHFTGALHSMGEVHHGGTVTDHMVQERQRGITIASAAVTVGWRDHRINIIDTPGHIDFNIEVNRSLRVLDGAVVVFDSVAGVEPQSETNWRLADQYGVPRICLVNKMDRIGADYLRVVAMIRERLGAQPLVVHLPVFVEETYVGLIDLTTMSLHRWNADDGWKYSSEEITPEYQEQAAQYRAQLEETLVELDDELLEGWFNGATLQADDLKRLIRQGVVSGAFVPVLCASAFKNKGVQMVLDAVVDYLPSPQEVKGMETVDGAQIVDADVDGAFAALAFKVVNDKHGALTYVRVYRGTLQSGSRVLNTNVGQYERIGRIYEMHADRKVARDRIGAGDIVALVGMKHTQTGDTLCAPEAPLVLERINAPEPVMDIVIEPKSRQDQDRLGEALRAIVGEDPSLRLSTGAAGETLVSGMGELHLEIVVDRLQTDFDIAVTVGRPQVAYRETITQSAAVDYVYKKQKGGPGQFAEVRMRFEPIAGDGIEFESQIVGAAIPREYIPAVEDGVRQAARSGVLGGYPCGGFKAVLLDGAYHAQDSSQLAFSVAGREAFKEAMAQATPRLLEPVMAVEIVTPRDHVGDCIGDLMRRRGSILNQLDRGDACVINAEAPLAEMFGYIGDLRTMTAGRASFSMTFSHYAETPQGVADAVLNAD.

In terms of domain architecture, tr-type G spans 4–278; that stretch reads QKLRNIGIIA…AVVDYLPSPQ (275 aa). Residues 13 to 20, 77 to 81, and 131 to 134 each bind GTP; these read AHVDAGKT, DTPGH, and NKMD.

The protein belongs to the TRAFAC class translation factor GTPase superfamily. Classic translation factor GTPase family. EF-G/EF-2 subfamily.

The protein localises to the cytoplasm. In terms of biological role, catalyzes the GTP-dependent ribosomal translocation step during translation elongation. During this step, the ribosome changes from the pre-translocational (PRE) to the post-translocational (POST) state as the newly formed A-site-bound peptidyl-tRNA and P-site-bound deacylated tRNA move to the P and E sites, respectively. Catalyzes the coordinated movement of the two tRNA molecules, the mRNA and conformational changes in the ribosome. In Hahella chejuensis (strain KCTC 2396), this protein is Elongation factor G 2.